A 281-amino-acid chain; its full sequence is 2-dehydro-3-deoxyphosphooctonate aldolase (281 aa).

The protein belongs to the KdsA family.

It localises to the cytoplasm. It carries out the reaction D-arabinose 5-phosphate + phosphoenolpyruvate + H2O = 3-deoxy-alpha-D-manno-2-octulosonate-8-phosphate + phosphate. It functions in the pathway carbohydrate biosynthesis; 3-deoxy-D-manno-octulosonate biosynthesis; 3-deoxy-D-manno-octulosonate from D-ribulose 5-phosphate: step 2/3. It participates in bacterial outer membrane biogenesis; lipopolysaccharide biosynthesis. The protein is 2-dehydro-3-deoxyphosphooctonate aldolase of Pseudomonas fluorescens (strain ATCC BAA-477 / NRRL B-23932 / Pf-5).